Reading from the N-terminus, the 306-residue chain is Porphobilinogen deaminase (306 aa).

Cys237 is subject to S-(dipyrrolylmethanemethyl)cysteine.

Belongs to the HMBS family. Monomer. Dipyrromethane is required as a cofactor.

The catalysed reaction is 4 porphobilinogen + H2O = hydroxymethylbilane + 4 NH4(+). It functions in the pathway porphyrin-containing compound metabolism; protoporphyrin-IX biosynthesis; coproporphyrinogen-III from 5-aminolevulinate: step 2/4. Tetrapolymerization of the monopyrrole PBG into the hydroxymethylbilane pre-uroporphyrinogen in several discrete steps. This is Porphobilinogen deaminase from Syntrophus aciditrophicus (strain SB).